Here is a 123-residue protein sequence, read N- to C-terminus: Undecaprenol kinase (123 aa).

The Cytoplasmic segment spans residues 1 to 33 (MDSKDHRNELNRFFKSFVHAGRGIWETARTERN). A helical membrane pass occupies residues 34–51 (FQFHAAAACAVLICGFLV). Topologically, residues 52 to 57 (ELSIIE) are extracellular. A helical membrane pass occupies residues 58–74 (WMIIFLLIGGMFSLELL). Topologically, residues 75–99 (NTAIEHTVDLITDKHHPLAKAAKDA) are cytoplasmic. Residues 100-120 (AAGAVCVFAVISCIIGLLIFL) form a helical membrane-spanning segment. Topologically, residues 121-123 (PKL) are extracellular.

The protein belongs to the bacterial diacylglycerol kinase family.

It localises to the cell membrane. The catalysed reaction is di-trans,octa-cis-undecaprenol + ATP = di-trans,octa-cis-undecaprenyl phosphate + ADP + H(+). Functionally, catalyzes the phosphorylation of undecaprenol in vitro, which is probably the physiological substrate. Exhibits no detectable activity against other substrates such as monoacylglycerol, ceramide, or diacylglycerol (DAG). Appears indispensable for the maintenance of spore stability and viability in B.subtilis. This is Undecaprenol kinase (dgkA) from Bacillus subtilis (strain 168).